A 1187-amino-acid chain; its full sequence is DNA-directed RNA polymerase subunit beta (1187 aa).

The tract at residues 1150–1187 (KDEDDDPASSADDLGFNIGARPDAAAKEDQKAEEPEYQ) is disordered. Over residues 1173–1187 (AAAKEDQKAEEPEYQ) the composition is skewed to basic and acidic residues.

The protein belongs to the RNA polymerase beta chain family. As to quaternary structure, the RNAP catalytic core consists of 2 alpha, 1 beta, 1 beta' and 1 omega subunit. When a sigma factor is associated with the core the holoenzyme is formed, which can initiate transcription.

It carries out the reaction RNA(n) + a ribonucleoside 5'-triphosphate = RNA(n+1) + diphosphate. Functionally, DNA-dependent RNA polymerase catalyzes the transcription of DNA into RNA using the four ribonucleoside triphosphates as substrates. The protein is DNA-directed RNA polymerase subunit beta of Bifidobacterium longum (strain NCC 2705).